A 218-amino-acid chain; its full sequence is Protein-methionine-sulfoxide reductase heme-binding subunit MsrQ (218 aa).

The next 5 helical transmembrane spans lie at 14–34 (LVHA…WQVW), 60–80 (LLLI…AVVI), 86–106 (LGLY…TLDL), 121–141 (PYIT…ITST), and 155–175 (LHML…WLVK).

This sequence belongs to the MsrQ family. As to quaternary structure, heterodimer of a catalytic subunit (MsrP) and a heme-binding subunit (MsrQ). FMN is required as a cofactor. Requires heme b as cofactor.

It is found in the cell inner membrane. Functionally, part of the MsrPQ system that repairs oxidized periplasmic proteins containing methionine sulfoxide residues (Met-O), using respiratory chain electrons. Thus protects these proteins from oxidative-stress damage caused by reactive species of oxygen and chlorine generated by the host defense mechanisms. MsrPQ is essential for the maintenance of envelope integrity under bleach stress, rescuing a wide series of structurally unrelated periplasmic proteins from methionine oxidation. MsrQ provides electrons for reduction to the reductase catalytic subunit MsrP, using the quinone pool of the respiratory chain. The sequence is that of Protein-methionine-sulfoxide reductase heme-binding subunit MsrQ from Xanthomonas axonopodis pv. citri (strain 306).